The primary structure comprises 340 residues: Porphobilinogen deaminase (340 aa).

C258 carries the post-translational modification S-(dipyrrolylmethanemethyl)cysteine.

Belongs to the HMBS family. It depends on dipyrromethane as a cofactor.

It catalyses the reaction 4 porphobilinogen + H2O = hydroxymethylbilane + 4 NH4(+). Its pathway is porphyrin-containing compound metabolism; protoporphyrin-IX biosynthesis; coproporphyrinogen-III from 5-aminolevulinate: step 2/4. Tetrapolymerization of the monopyrrole PBG into the hydroxymethylbilane pre-uroporphyrinogen in several discrete steps. The protein is Porphobilinogen deaminase (HEM3) of Candida albicans (strain SC5314 / ATCC MYA-2876) (Yeast).